The following is a 636-amino-acid chain: MGKSIGIDLGTTNSCVAVLEGGDPVVIPNAEGERTTPSVVAFDRKSGERLVGQLARRQAVTNPERTVYSIKRFMGRRYNDVKQEAERVGYQVVPGPHGDVRVRLGDKDYSPPEISAMILQKLKRDAEDYLGEEVTDAVITVPAYFEDAQRQATKDAGRIAGLNVKRIINEPTAAALAYGLDKENDQTILVFDLGGGTFDVSILELGDGVFEVKATSGNNHLGGDDFDAKVVEWIVEEFKKAEGIDLSRDKMAMQRLVEAAEKAKKELSSTTSTNINLPFITADANGPKHLDLTLTRAQFNKLTADLVEATAGPVRQAMQDAGLKPGDVDQVILVGGSTRIPAVQEKVKELTGKEPHKGINPDEVVAIGAAIQAGVLAGEVKDVLLLDVTPLSLGIETKGGVFTKLIERNTTIPTRKSEIFTTAEDNQQSVEIKVYQGEREIAAHNKLIGNFQLVGIPPAPRGVPQIEVTFDIDANGILNVGAKDLGTGKEQKITITASSGLSDQEIEQMVRDAEAHAEEDRRKREEAEIRNNADNLVYSVERSLKEVDGKVDSSTREEIEKAIKEAKEALAGDDIEEIKRKQEALMSASHKLSQVLYQQAQEQQQSGSSGGSSDEDVVEDAEIVDEEDEEKRDDNR.

The residue at position 197 (T197) is a Phosphothreonine; by autocatalysis. Positions 596-607 (LYQQAQEQQQSG) are enriched in low complexity. Positions 596-636 (LYQQAQEQQQSGSSGGSSDEDVVEDAEIVDEEDEEKRDDNR) are disordered. A compositionally biased stretch (acidic residues) spans 613-636 (SDEDVVEDAEIVDEEDEEKRDDNR).

Belongs to the heat shock protein 70 family.

Its function is as follows. Acts as a chaperone. This chain is Chaperone protein DnaK, found in Rubrobacter xylanophilus (strain DSM 9941 / JCM 11954 / NBRC 16129 / PRD-1).